The following is a 179-amino-acid chain: UPF0134 protein MPN_145 (179 aa).

It belongs to the UPF0134 family.

This Mycoplasma pneumoniae (strain ATCC 29342 / M129 / Subtype 1) (Mycoplasmoides pneumoniae) protein is UPF0134 protein MPN_145.